A 1213-amino-acid chain; its full sequence is Filamin-A-interacting protein 1 (1213 aa).

A disordered region spans residues 1-70 (MRSRNQGGES…TSGECERKTK (70 aa)). Basic and acidic residues predominate over residues 61 to 70 (TSGECERKTK). Ser-138 carries the phosphoserine modification. Coiled-coil stretches lie at residues 192–591 (DYMN…ELSC) and 624–781 (PEDN…LSKR). 2 disordered regions span residues 878 to 900 (NGPS…PGEV) and 949 to 976 (KPRI…GPER). Composition is skewed to polar residues over residues 880-894 (PSIT…NSSP) and 960-970 (VMPQKQKSGDT). Residue Ser-979 is modified to Phosphoserine. Positions 1103–1213 (VSTGTVLRSP…STTSLGGGKG (111 aa)) are disordered. Low complexity predominate over residues 1125–1138 (VTSTITITPVTTSS). The segment covering 1139–1156 (ARGTQSVSGQDGSSQRPT) has biased composition (polar residues). The span at 1168-1179 (AGKPVVAAPGAG) shows a compositional bias: low complexity.

It belongs to the FILIP1 family. In terms of assembly, interacts with FLNA. Interacts with RHOD (in GTP-bound form). As to expression, moderately expressed in adult heart and brain. Weakly expressed in lung, skeletal muscle, ovary, testis, kidney, and fetal brain, and hardly detectable in liver, pancreas, spleen, and fetal liver. Within brain, moderate expression is found in amygdala and caudate nucleus. Expressed in skin fibroblasts.

The protein localises to the cytoplasm. It localises to the cytoskeleton. In terms of biological role, by acting through a filamin-A/F-actin axis, it controls the start of neocortical cell migration from the ventricular zone. May be able to induce the degradation of filamin-A. This chain is Filamin-A-interacting protein 1 (FILIP1), found in Homo sapiens (Human).